A 473-amino-acid chain; its full sequence is MRYKFKTQEDLVNHLKSVGFVFANSEIYNGLANAWDYGPLGVLLKNNLKNLWWKEFVTKQKNIVGLDSAIILNPLVWKASGHLDNFSDPLIDCKSCKTRYRADKLIESFNKDIHIAENSTNEEFMKVLNDHKIFCPTCKQFNWTDIRHFNLMFKTHQGVIEDPKNIVYLRPETAQGIFVNFKNVQRSMRLHLPFGIAQIGKSFRNEITPGNFIFRTREFEQMEIEFFLKEEIAYDVFDKYLNQIQNWLVTCCGLDLNNLRKHEHPKEELSHYSKKTIDFEYNFLHGFSELYGIAYRTNYDLSVHMNLSKKDLTYFDEETKQKYIPHVIEPSVGVERLLYAILTEATFIEKLANDEDRILMNLKYDLAPYKIAVMPLVNKLKEKAEAVYNKILDLNISVTFDNSGSIGKRYRRQDAIGTIYCITIDYDSFGDEHDPTFTIRERNTMAQKRIKLSELSLYLSQKAHEDFQKQCQK.

Arginine 101 and glutamate 172 together coordinate substrate. ATP contacts are provided by residues 204 to 206 (RNE), 214 to 219 (FRTREF), 289 to 290 (EL), and 333 to 336 (GVER). 219–223 (FEQME) contacts substrate. Position 329–333 (329–333 (EPSVG)) interacts with substrate.

The protein belongs to the class-II aminoacyl-tRNA synthetase family. In terms of assembly, homodimer.

Its subcellular location is the cytoplasm. The enzyme catalyses tRNA(Gly) + glycine + ATP = glycyl-tRNA(Gly) + AMP + diphosphate. Its function is as follows. Catalyzes the attachment of glycine to tRNA(Gly). This Ureaplasma parvum serovar 3 (strain ATCC 27815 / 27 / NCTC 11736) protein is Glycine--tRNA ligase.